Consider the following 200-residue polypeptide: Pyridoxal phosphate homeostasis protein (200 aa).

The residue at position 11 (Lys-11) is an N6-(pyridoxal phosphate)lysine.

It belongs to the pyridoxal phosphate-binding protein YggS/PROSC family. As to quaternary structure, monomer.

In terms of biological role, pyridoxal 5'-phosphate (PLP)-binding protein, which is involved in PLP homeostasis. The polypeptide is Pyridoxal phosphate homeostasis protein (Buchnera aphidicola subsp. Acyrthosiphon pisum (strain APS) (Acyrthosiphon pisum symbiotic bacterium)).